The chain runs to 560 residues: Probable sulfate transporter Rv1739c (560 aa).

Residues 1 to 436 (MIPTMTSAGW…VLGFVPGIAG (436 aa)) are required for sulfate transport in E.coli. A run of 11 helical transmembrane segments spans residues 29-49 (VLAGLTVAAYLIPQAMAYATV), 51-71 (GLPPAAGLWASIAPLAIYALL), 79-99 (IGPESATALMTAAVLAPMAAG), 105-125 (AVLAATLGLLVGLICLLAGTA), 138-158 (VLVGYMAGIALVMISSQLGTI), 184-204 (WPTFVLAMSVLALLTMLTRWA), 207-227 (APGPIIAVLAATMLVAVMSLD), 256-276 (ALIIPAAGIAIVTFTDGVLTA), 333-353 (LIALGLVVIVMVFASGLLAMF), 355-375 (IAALGALVVYAALRLIDLSEF), and 394-414 (AAVLGLGVFYGVLAAVALSIL). Residues 442–557 (DYPQAKRVPG…MTLPTAVQAF (116 aa)) form the STAS domain.

It belongs to the SLC26A/SulP transporter (TC 2.A.53) family.

The protein localises to the cell membrane. Expression in E.coli induces sulfate uptake during early- to mid-log phase growth. Uptake is maximal at pH 6.0, is sulfate-specific, requires E.coli CysA and the transmembrane segment but not the STAS domain of the protein. This Mycobacterium tuberculosis (strain ATCC 25618 / H37Rv) protein is Probable sulfate transporter Rv1739c.